The primary structure comprises 407 residues: Serine/threonine-protein kinase GRIK2 (407 aa).

Residues 21–64 are disordered; it reads SGSRNQQSPKPYDDDTHSCDSDVTSTARGEEEEDEEEVEQKSRS. Positions 31-40 are enriched in basic and acidic residues; it reads PYDDDTHSCD. Positions 107–370 constitute a Protein kinase domain; that stretch reads YVRVCKIGSG…LKNVSEHPWV (264 aa). ATP-binding positions include 113–121 and Lys-136; that span reads IGSGSYGKV. Thr-153 carries the phosphothreonine; by autocatalysis modification. Asp-238 functions as the Proton acceptor in the catalytic mechanism. At Ser-260 the chain carries Phosphoserine; by KIN10.

It belongs to the protein kinase superfamily. Ser/Thr protein kinase family. As to quaternary structure, associates with the SNF1-related protein kinase (SnRK) complex. Interacts with AL1, a geminivirus (TGMV) protein essential for viral replication. In terms of tissue distribution, expressed in shoot apical meristem, leaf primordium and emerging petiole (at protein level).

It catalyses the reaction L-seryl-[protein] + ATP = O-phospho-L-seryl-[protein] + ADP + H(+). The enzyme catalyses L-threonyl-[protein] + ATP = O-phospho-L-threonyl-[protein] + ADP + H(+). With respect to regulation, activated when autophosphorylated at Thr-153 and inactivated when phosphorylated at Ser-260 by SnRK1.1/KIN10. Functionally, activates SnRK1.1/KIN10 and SnRK1.2/KIN11 by phosphorylation of their activation-loop 'Thr-198' and 'Thr-176', respectively. Required for the regulation by SnRK1 kinases of the transcription of a large set of genes, the modification the activity of metabolic enzymes, and the control of various nutrient-responsive cellular developmental processes. This chain is Serine/threonine-protein kinase GRIK2 (GRIK2), found in Arabidopsis thaliana (Mouse-ear cress).